The sequence spans 101 residues: Large ribosomal subunit protein bL21 (101 aa).

This sequence belongs to the bacterial ribosomal protein bL21 family. As to quaternary structure, part of the 50S ribosomal subunit. Contacts protein L20.

Functionally, this protein binds to 23S rRNA in the presence of protein L20. The chain is Large ribosomal subunit protein bL21 from Magnetococcus marinus (strain ATCC BAA-1437 / JCM 17883 / MC-1).